Reading from the N-terminus, the 403-residue chain is Cytochrome P450-SU2 (403 aa).

The segment at 1–24 (MTTAERTAPPDALTVPASRAPGCP) is disordered. Residue C352 coordinates heme.

This sequence belongs to the cytochrome P450 family. Heme serves as cofactor.

Its function is as follows. Metabolism of a number of sulfonylurea herbicides. The polypeptide is Cytochrome P450-SU2 (cyp105B1) (Streptomyces griseolus).